The primary structure comprises 365 residues: 3-dehydroquinate synthase (365 aa).

NAD(+)-binding positions include Gly-106–Asp-110, Thr-130–Thr-131, Lys-142, Lys-151, and Phe-169–Thr-172. 3 residues coordinate Zn(2+): Glu-184, His-247, and His-264.

Belongs to the sugar phosphate cyclases superfamily. Dehydroquinate synthase family. Co(2+) serves as cofactor. Zn(2+) is required as a cofactor. It depends on NAD(+) as a cofactor.

The protein localises to the cytoplasm. It carries out the reaction 7-phospho-2-dehydro-3-deoxy-D-arabino-heptonate = 3-dehydroquinate + phosphate. It participates in metabolic intermediate biosynthesis; chorismate biosynthesis; chorismate from D-erythrose 4-phosphate and phosphoenolpyruvate: step 2/7. Its function is as follows. Catalyzes the conversion of 3-deoxy-D-arabino-heptulosonate 7-phosphate (DAHP) to dehydroquinate (DHQ). In Listeria monocytogenes serotype 4a (strain HCC23), this protein is 3-dehydroquinate synthase.